The chain runs to 238 residues: uncharacterized protein (238 aa).

An N-terminal signal peptide occupies residues 1-19 (MKINLFFVFLFELLHFVAA). The Lumenal portion of the chain corresponds to 20 to 197 (YSCEGDESAA…LALYGHLSQK (178 aa)). Residues 198–216 (YTPLGMNVAIFGISAYIMY) traverse the membrane as a helical segment. Over 217–238 (RSSKKAKQKQAAAAAAAAAKKK) the chain is Cytoplasmic.

The protein resides in the endoplasmic reticulum membrane. This is an uncharacterized protein from Schizosaccharomyces pombe (strain 972 / ATCC 24843) (Fission yeast).